Reading from the N-terminus, the 402-residue chain is Sulfate adenylyltransferase (402 aa).

It belongs to the sulfate adenylyltransferase family.

The enzyme catalyses sulfate + ATP + H(+) = adenosine 5'-phosphosulfate + diphosphate. It functions in the pathway sulfur metabolism; hydrogen sulfide biosynthesis; sulfite from sulfate: step 1/3. This chain is Sulfate adenylyltransferase, found in Vesicomyosocius okutanii subsp. Calyptogena okutanii (strain HA).